Reading from the N-terminus, the 948-residue chain is Isoleucine--tRNA ligase (948 aa).

Residues 58–68 carry the 'HIGH' region motif; it reads PYANGDIHIGH. E566 lines the L-isoleucyl-5'-AMP pocket. The 'KMSKS' region motif lies at 607–611; the sequence is KMSKS. ATP is bound at residue K610. Zn(2+)-binding residues include C911, C914, C931, and C934.

Belongs to the class-I aminoacyl-tRNA synthetase family. IleS type 1 subfamily. In terms of assembly, monomer. It depends on Zn(2+) as a cofactor.

Its subcellular location is the cytoplasm. It catalyses the reaction tRNA(Ile) + L-isoleucine + ATP = L-isoleucyl-tRNA(Ile) + AMP + diphosphate. Catalyzes the attachment of isoleucine to tRNA(Ile). As IleRS can inadvertently accommodate and process structurally similar amino acids such as valine, to avoid such errors it has two additional distinct tRNA(Ile)-dependent editing activities. One activity is designated as 'pretransfer' editing and involves the hydrolysis of activated Val-AMP. The other activity is designated 'posttransfer' editing and involves deacylation of mischarged Val-tRNA(Ile). This is Isoleucine--tRNA ligase from Vibrio vulnificus (strain CMCP6).